Consider the following 142-residue polypeptide: Nucleoside diphosphate kinase (142 aa).

The ATP site is built by K11, F59, R87, T93, R104, and N114. The Pros-phosphohistidine intermediate role is filled by H117.

It belongs to the NDK family. Homotetramer. Mg(2+) serves as cofactor.

Its subcellular location is the cytoplasm. The catalysed reaction is dZDP + ATP = dZTP + ADP. It carries out the reaction a 2'-deoxyribonucleoside 5'-diphosphate + ATP = a 2'-deoxyribonucleoside 5'-triphosphate + ADP. The enzyme catalyses a ribonucleoside 5'-diphosphate + ATP = a ribonucleoside 5'-triphosphate + ADP. It participates in purine metabolism. Functionally, major role in the synthesis of nucleoside triphosphates other than ATP. The ATP gamma phosphate is transferred to the NDP beta phosphate via a ping-pong mechanism, using a phosphorylated active-site intermediate. (Microbial infection) Catalyzes the phosphorylation of dZDP to dZTP, when the bacterium is infected by a phage that produces the substrate for the synthesis of dZTP (2- amino-2'-deoxyadenosine 5'-triphosphate), which is then used by the phage as a DNA polymerase substrate. This chain is Nucleoside diphosphate kinase, found in Vibrio cholerae serotype O1 (strain ATCC 39315 / El Tor Inaba N16961).